A 338-amino-acid polypeptide reads, in one-letter code: Ketol-acid reductoisomerase (NADP(+)) (338 aa).

In terms of domain architecture, KARI N-terminal Rossmann spans 1-181; that stretch reads MQVYYDKDAD…GGGRAGVIET (181 aa). NADP(+) is bound by residues 24 to 27, arginine 47, serine 50, serine 52, and 82 to 85; these read YGSQ and DEHQ. Histidine 107 is a catalytic residue. Glycine 133 is a binding site for NADP(+). In terms of domain architecture, KARI C-terminal knotted spans 182–327; sequence SFKDETETDL…AKLRDMMPWI (146 aa). Mg(2+)-binding residues include aspartate 190, glutamate 194, glutamate 226, and glutamate 230. Serine 251 contributes to the substrate binding site.

The protein belongs to the ketol-acid reductoisomerase family. It depends on Mg(2+) as a cofactor.

It catalyses the reaction (2R)-2,3-dihydroxy-3-methylbutanoate + NADP(+) = (2S)-2-acetolactate + NADPH + H(+). The enzyme catalyses (2R,3R)-2,3-dihydroxy-3-methylpentanoate + NADP(+) = (S)-2-ethyl-2-hydroxy-3-oxobutanoate + NADPH + H(+). The protein operates within amino-acid biosynthesis; L-isoleucine biosynthesis; L-isoleucine from 2-oxobutanoate: step 2/4. It functions in the pathway amino-acid biosynthesis; L-valine biosynthesis; L-valine from pyruvate: step 2/4. Its function is as follows. Involved in the biosynthesis of branched-chain amino acids (BCAA). Catalyzes an alkyl-migration followed by a ketol-acid reduction of (S)-2-acetolactate (S2AL) to yield (R)-2,3-dihydroxy-isovalerate. In the isomerase reaction, S2AL is rearranged via a Mg-dependent methyl migration to produce 3-hydroxy-3-methyl-2-ketobutyrate (HMKB). In the reductase reaction, this 2-ketoacid undergoes a metal-dependent reduction by NADPH to yield (R)-2,3-dihydroxy-isovalerate. This chain is Ketol-acid reductoisomerase (NADP(+)), found in Thioalkalivibrio sulfidiphilus (strain HL-EbGR7).